The chain runs to 88 residues: Apolipoprotein C-I (88 aa).

An N-terminal signal peptide occupies residues 1 to 26 (MRLILSLPVLAVVLAMVLEGPAPAQA).

It belongs to the apolipoprotein C1 family.

It localises to the secreted. Inhibitor of lipoprotein binding to the low density lipoprotein (LDL) receptor, LDL receptor-related protein, and very low density lipoprotein (VLDL) receptor. Associates with high density lipoproteins (HDL) and the triacylglycerol-rich lipoproteins in the plasma and makes up about 10% of the protein of the VLDL and 2% of that of HDL. Appears to interfere directly with fatty acid uptake and is also the major plasma inhibitor of cholesteryl ester transfer protein (CETP). Binds free fatty acids and reduces their intracellular esterification. Modulates the interaction of APOE with beta-migrating VLDL and inhibits binding of beta-VLDL to the LDL receptor-related protein. In Eidolon helvum (Straw-colored fruit bat), this protein is Apolipoprotein C-I (APOC1).